Reading from the N-terminus, the 78-residue chain is uncharacterized protein (78 aa).

A disordered region spans residues 1–78 (MSSNSNTDHS…VDLEGPKDEQ (78 aa)). Basic and acidic residues-rich tracts occupy residues 10-33 (STGDNRSKSEKQTDLRNALRETES) and 63-78 (LNLKEPVDLEGPKDEQ).

This is an uncharacterized protein from Schizosaccharomyces pombe (strain 972 / ATCC 24843) (Fission yeast).